A 398-amino-acid polypeptide reads, in one-letter code: Succinate--CoA ligase [ADP-forming] subunit beta (398 aa).

An ATP-grasp domain is found at 9 to 254; it reads KRLLHEYGAP…ISEEDPKEIE (246 aa). Residues Lys46, 53–55, Glu109, Ala112, and Glu117 each bind ATP; that span reads GRG. Residues Asn209 and Asp223 each coordinate Mg(2+). Substrate-binding positions include Asn274 and 331 to 333; that span reads GIM.

Belongs to the succinate/malate CoA ligase beta subunit family. Heterotetramer of two alpha and two beta subunits. Requires Mg(2+) as cofactor.

It carries out the reaction succinate + ATP + CoA = succinyl-CoA + ADP + phosphate. The catalysed reaction is GTP + succinate + CoA = succinyl-CoA + GDP + phosphate. The protein operates within carbohydrate metabolism; tricarboxylic acid cycle; succinate from succinyl-CoA (ligase route): step 1/1. In terms of biological role, succinyl-CoA synthetase functions in the citric acid cycle (TCA), coupling the hydrolysis of succinyl-CoA to the synthesis of either ATP or GTP and thus represents the only step of substrate-level phosphorylation in the TCA. The beta subunit provides nucleotide specificity of the enzyme and binds the substrate succinate, while the binding sites for coenzyme A and phosphate are found in the alpha subunit. In Bartonella bacilliformis (strain ATCC 35685 / KC583 / Herrer 020/F12,63), this protein is Succinate--CoA ligase [ADP-forming] subunit beta.